A 149-amino-acid polypeptide reads, in one-letter code: Small heat shock protein IbpB (149 aa).

One can recognise a sHSP domain in the interval 26-137 (SQEPIDFPPY…QPQRIAIGGG (112 aa)).

The protein belongs to the small heat shock protein (HSP20) family. In terms of assembly, homodimer. Forms homomultimers of about 100-150 subunits at optimal growth temperatures. Conformation changes to oligomers at high temperatures or high ionic concentrations. The decrease in size of the multimers is accompanied by an increase in chaperone activity.

The protein localises to the cytoplasm. Associates with aggregated proteins, together with IbpA, to stabilize and protect them from irreversible denaturation and extensive proteolysis during heat shock and oxidative stress. Aggregated proteins bound to the IbpAB complex are more efficiently refolded and reactivated by the ATP-dependent chaperone systems ClpB and DnaK/DnaJ/GrpE. Its activity is ATP-independent. The protein is Small heat shock protein IbpB of Pectobacterium carotovorum subsp. carotovorum (strain PC1).